The sequence spans 167 residues: Leptin (167 aa).

Residues 1–21 form the signal peptide; that stretch reads MCWRPLCRFLWLWSYLSYVQA. C117 and C167 are disulfide-bonded.

The protein belongs to the leptin family.

The protein localises to the secreted. Its function is as follows. Key player in the regulation of energy balance and body weight control. Once released into the circulation, has central and peripheral effects by binding LEPR, found in many tissues, which results in the activation of several major signaling pathways. In the hypothalamus, acts as an appetite-regulating factor that induces a decrease in food intake and an increase in energy consumption by inducing anorexinogenic factors and suppressing orexigenic neuropeptides, also regulates bone mass and secretion of hypothalamo-pituitary-adrenal hormones. In the periphery, increases basal metabolism, influences reproductive function, regulates pancreatic beta-cell function and insulin secretion, is pro-angiogenic for endothelial cell and affects innate and adaptive immunity. In the arcuate nucleus of the hypothalamus, activates by depolarization POMC neurons inducing FOS and SOCS3 expression to release anorexigenic peptides and inhibits by hyperpolarization NPY neurons inducing SOCS3 with a consequent reduction on release of orexigenic peptides. In addition to its known satiety inducing effect, has a modulatory role in nutrient absorption. In the intestine, reduces glucose absorption by enterocytes by activating PKC and leading to a sequential activation of p38, PI3K and ERK signaling pathways which exerts an inhibitory effect on glucose absorption. Acts as a growth factor on certain tissues, through the activation of different signaling pathways increases expression of genes involved in cell cycle regulation such as CCND1, via JAK2-STAT3 pathway, or VEGFA, via MAPK1/3 and PI3K-AKT1 pathways. May also play an apoptotic role via JAK2-STAT3 pathway and up-regulation of BIRC5 expression. Pro-angiogenic, has mitogenic activity on vascular endothelial cells and plays a role in matrix remodeling by regulating the expression of matrix metalloproteinases (MMPs) and tissue inhibitors of metalloproteinases (TIMPs). In innate immunity, modulates the activity and function of neutrophils by increasing chemotaxis and the secretion of oxygen radicals. Increases phagocytosis by macrophages and enhances secretion of pro-inflammatory mediators. Increases cytotoxic ability of NK cells. Plays a pro-inflammatory role, in synergy with IL1B, by inducing NOS2 which promotes the production of IL6, IL8 and Prostaglandin E2, through a signaling pathway that involves JAK2, PI3K, MAP2K1/MEK1 and MAPK14/p38. In adaptive immunity, promotes the switch of memory T-cells towards T helper-1 cell immune responses. Increases CD4(+)CD25(-) T-cell proliferation and reduces autophagy during TCR (T-cell receptor) stimulation, through MTOR signaling pathway activation and BCL2 up-regulation. This Rattus norvegicus (Rat) protein is Leptin (Lep).